The primary structure comprises 314 residues: Acetyl-coenzyme A carboxylase carboxyl transferase subunit alpha (314 aa).

The 258-residue stretch at 32-289 (EIDMLEASLE…KSAFVAQLDS (258 aa)) folds into the CoA carboxyltransferase C-terminal domain.

It belongs to the AccA family. In terms of assembly, acetyl-CoA carboxylase is a heterohexamer composed of biotin carboxyl carrier protein (AccB), biotin carboxylase (AccC) and two subunits each of ACCase subunit alpha (AccA) and ACCase subunit beta (AccD).

It localises to the cytoplasm. The catalysed reaction is N(6)-carboxybiotinyl-L-lysyl-[protein] + acetyl-CoA = N(6)-biotinyl-L-lysyl-[protein] + malonyl-CoA. The protein operates within lipid metabolism; malonyl-CoA biosynthesis; malonyl-CoA from acetyl-CoA: step 1/1. Component of the acetyl coenzyme A carboxylase (ACC) complex. First, biotin carboxylase catalyzes the carboxylation of biotin on its carrier protein (BCCP) and then the CO(2) group is transferred by the carboxyltransferase to acetyl-CoA to form malonyl-CoA. The sequence is that of Acetyl-coenzyme A carboxylase carboxyl transferase subunit alpha from Staphylococcus aureus (strain JH9).